Here is a 64-residue protein sequence, read N- to C-terminus: Prokaryotic ubiquitin-like protein Pup (64 aa).

Residues 1 to 11 show a composition bias toward basic and acidic residues; it reads MAQEQTKRGGG. The segment at 1–36 is disordered; the sequence is MAQEQTKRGGGGDDDDVTDLGGPAGQERREKLAEDT. The interval 21 to 58 is ARC ATPase binding; sequence GGPAGQERREKLAEDTDDLLDEIDDVLEENAEDFVRAY. Residues 24–52 are a coiled coil; sequence AGQERREKLAEDTDDLLDEIDDVLEENAE. Gln-64 is modified (deamidated glutamine). An Isoglutamyl lysine isopeptide (Gln-Lys) (interchain with K-? in acceptor proteins) cross-link involves residue Gln-64.

The protein belongs to the prokaryotic ubiquitin-like protein family. As to quaternary structure, strongly interacts with the proteasome-associated ATPase ARC through a hydrophobic interface; the interacting region of Pup lies in its C-terminal half. There is one Pup binding site per ARC hexamer ring. Is modified by deamidation of its C-terminal glutamine to glutamate by the deamidase Dop, a prerequisite to the subsequent pupylation process.

Its pathway is protein degradation; proteasomal Pup-dependent pathway. Protein modifier that is covalently attached to lysine residues of substrate proteins, thereby targeting them for proteasomal degradation. The tagging system is termed pupylation. In Mycobacteroides abscessus (strain ATCC 19977 / DSM 44196 / CCUG 20993 / CIP 104536 / JCM 13569 / NCTC 13031 / TMC 1543 / L948) (Mycobacterium abscessus), this protein is Prokaryotic ubiquitin-like protein Pup.